We begin with the raw amino-acid sequence, 80 residues long: Peroxidase (80 aa).

Positions 56–80 (DANEAEANSDLPGFNSSRSELEAAF) are disordered. A substrate-binding site is contributed by Pro67. Asn70 carries an N-linked (GlcNAc...) asparagine glycan.

It belongs to the peroxidase family. Classical plant (class III) peroxidase subfamily. The cofactor is Ca(2+). Requires heme b as cofactor.

The enzyme catalyses 2 a phenolic donor + H2O2 = 2 a phenolic radical donor + 2 H2O. Removal of H(2)O(2), oxidation of toxic reductants, biosynthesis and degradation of lignin, suberization, auxin catabolism, response to environmental stresses such as wounding, pathogen attack and oxidative stress. These functions might be dependent on each isozyme/isoform in each plant tissue. In Triticum aestivum (Wheat), this protein is Peroxidase.